Reading from the N-terminus, the 95-residue chain is MSHSYKKAISDEALRPFQMDYFGGLPPGQYATRMTGQVHGSGCHLRSAPCDLGASQRKLSSNFSEIDAGLFSQGKSAAYTDIGATKPVEQRETAS.

This is an uncharacterized protein from Homo sapiens (Human).